The primary structure comprises 2216 residues: RNA-directed RNA polymerase L (2216 aa).

Positions 26–289 (KTSFLSQVNL…ETRTAMLDER (264 aa)) are endonuclease. Residues Glu-51, Asp-88, and Glu-101 each contribute to the Mn(2+) site. Lys-114 is an active-site residue. Residues 1167–1364 (LDMKCVVRLS…YLSSKFNKFV (198 aa)) form the RdRp catalytic domain. Residue Asp-1323 participates in Mg(2+) binding.

It belongs to the Bunyavirales RNA polymerase family. Homomultimer; the oligomeric structure is essential for the polymerase activity. Interacts with nucleoprotein N. Interacts with protein Z; this interaction inhibits viral transcription and replication, Z partially blocks the product exit tunnel for the releasing nascent RNA product. Mn(2+) serves as cofactor. The cofactor is Mg(2+).

The protein resides in the virion. It localises to the host cytoplasm. It carries out the reaction RNA(n) + a ribonucleoside 5'-triphosphate = RNA(n+1) + diphosphate. In terms of biological role, RNA-dependent RNA polymerase, which is responsible for the replication and transcription of the viral RNA genome using antigenomic RNA as an intermediate. During transcription, synthesizes subgenomic RNAs and assures their capping by a cap-snatching mechanism, which involves the endonuclease activity cleaving the host capped pre-mRNAs. These short capped RNAs are then used as primers for viral transcription. The 3'-end of subgenomic mRNAs molecules are heterogeneous and not polyadenylated. The replicase function is to direct synthesis of antigenomic and genomic RNA which are encapsidated and non capped. As a consequence of the use of the same enzyme for both transcription and replication, these mechanisms need to be well coordinated. These processes may be regulated by proteins N and Z in a dose-dependent manner. Z protein inhibits the viral polymerase L und thus the viral transcription and RNA synthesis. This chain is RNA-directed RNA polymerase L, found in Bear Canyon mammarenavirus (isolate Mouse/United States/AV A0070039/2000) (BCNV).